The chain runs to 94 residues: Large ribosomal subunit protein bL28 (94 aa).

The protein belongs to the bacterial ribosomal protein bL28 family.

In Novosphingobium aromaticivorans (strain ATCC 700278 / DSM 12444 / CCUG 56034 / CIP 105152 / NBRC 16084 / F199), this protein is Large ribosomal subunit protein bL28.